A 338-amino-acid chain; its full sequence is Nicotinate-nucleotide--dimethylbenzimidazole phosphoribosyltransferase (338 aa).

Glu-305 serves as the catalytic Proton acceptor.

Belongs to the CobT family.

It catalyses the reaction 5,6-dimethylbenzimidazole + nicotinate beta-D-ribonucleotide = alpha-ribazole 5'-phosphate + nicotinate + H(+). Its pathway is nucleoside biosynthesis; alpha-ribazole biosynthesis; alpha-ribazole from 5,6-dimethylbenzimidazole: step 1/2. In terms of biological role, catalyzes the synthesis of alpha-ribazole-5'-phosphate from nicotinate mononucleotide (NAMN) and 5,6-dimethylbenzimidazole (DMB). The sequence is that of Nicotinate-nucleotide--dimethylbenzimidazole phosphoribosyltransferase from Rhizobium leguminosarum bv. trifolii (strain WSM2304).